A 118-amino-acid chain; its full sequence is Large ribosomal subunit protein bL19 (118 aa).

Belongs to the bacterial ribosomal protein bL19 family.

This protein is located at the 30S-50S ribosomal subunit interface and may play a role in the structure and function of the aminoacyl-tRNA binding site. The sequence is that of Large ribosomal subunit protein bL19 from Nautilia profundicola (strain ATCC BAA-1463 / DSM 18972 / AmH).